Reading from the N-terminus, the 372-residue chain is Queuine tRNA-ribosyltransferase (372 aa).

The active-site Proton acceptor is D92. Residues 92-96, D146, Q188, and G215 each bind substrate; that span reads DSGGF. Residues 246-252 are RNA binding; sequence GIGTLRE. The active-site Nucleophile is the D265. Positions 270–274 are RNA binding; important for wobble base 34 recognition; sequence TRLGR. Residues C303, C305, C308, and H334 each contribute to the Zn(2+) site.

Belongs to the queuine tRNA-ribosyltransferase family. As to quaternary structure, homodimer. Within each dimer, one monomer is responsible for RNA recognition and catalysis, while the other monomer binds to the replacement base PreQ1. The cofactor is Zn(2+).

It catalyses the reaction 7-aminomethyl-7-carbaguanine + guanosine(34) in tRNA = 7-aminomethyl-7-carbaguanosine(34) in tRNA + guanine. Its pathway is tRNA modification; tRNA-queuosine biosynthesis. In terms of biological role, catalyzes the base-exchange of a guanine (G) residue with the queuine precursor 7-aminomethyl-7-deazaguanine (PreQ1) at position 34 (anticodon wobble position) in tRNAs with GU(N) anticodons (tRNA-Asp, -Asn, -His and -Tyr). Catalysis occurs through a double-displacement mechanism. The nucleophile active site attacks the C1' of nucleotide 34 to detach the guanine base from the RNA, forming a covalent enzyme-RNA intermediate. The proton acceptor active site deprotonates the incoming PreQ1, allowing a nucleophilic attack on the C1' of the ribose to form the product. After dissociation, two additional enzymatic reactions on the tRNA convert PreQ1 to queuine (Q), resulting in the hypermodified nucleoside queuosine (7-(((4,5-cis-dihydroxy-2-cyclopenten-1-yl)amino)methyl)-7-deazaguanosine). This Synechococcus sp. (strain CC9902) protein is Queuine tRNA-ribosyltransferase.